A 341-amino-acid polypeptide reads, in one-letter code: Glycerol-1-phosphate dehydrogenase [NAD(P)+] (341 aa).

Residues 81–85 (GKAID) and 103–106 (TTAS) each bind NAD(+). Asp108 provides a ligand contact to substrate. Ser112 is an NAD(+) binding site. Asp151 is a binding site for substrate. Positions 151 and 232 each coordinate Zn(2+). His236 is a substrate binding site. Position 253 (His253) interacts with Zn(2+).

This sequence belongs to the glycerol-1-phosphate dehydrogenase family. Zn(2+) serves as cofactor.

The protein resides in the cytoplasm. It catalyses the reaction sn-glycerol 1-phosphate + NAD(+) = dihydroxyacetone phosphate + NADH + H(+). The enzyme catalyses sn-glycerol 1-phosphate + NADP(+) = dihydroxyacetone phosphate + NADPH + H(+). It functions in the pathway membrane lipid metabolism; glycerophospholipid metabolism. In terms of biological role, catalyzes the NAD(P)H-dependent reduction of dihydroxyacetonephosphate (DHAP or glycerone phosphate) to glycerol 1-phosphate (G1P). The G1P thus generated is used as the glycerophosphate backbone of phospholipids in the cellular membranes of Archaea. This chain is Glycerol-1-phosphate dehydrogenase [NAD(P)+], found in Methanococcus aeolicus (strain ATCC BAA-1280 / DSM 17508 / OCM 812 / Nankai-3).